Consider the following 349-residue polypeptide: MSQTTTAALISLSVFAAYAKYYQSFQNGFIALLSDMADTKSLSGLPGGLHCEYTGFAPLDRFLTACNIFFWPVFQGEVPNLSLYGVAFASALVPMWLVIVLETHRGRRPVAALMELAFLAGPLVQCLGPGLVIPAILSRLPMSTPGTKLPFGFDIGFYPSSMIIGYILPLILAALPTPRVTAYEAKQQLIAVWQGWPVYTSLIMLIIHYLRPMRASQDWQLKIACAFAFACSTAGHLAFLWFARAKTASYHVFLPPIPWRELQVASIEAGVLRFLQWDYTLSASAMLVWTVASYCRATGKRIGQSSSVILIFGMAGVVFLGPCSVALLLYTSVALQRKGVTNYDCCRSS.

N-linked (GlcNAc...) asparagine glycosylation occurs at asparagine 80. The next 6 helical transmembrane spans lie at 81-101 (LSLYGVAFASALVPMWLVIVL), 116-136 (LAFLAGPLVQCLGPGLVIPAI), 155-175 (IGFYPSSMIIGYILPLILAAL), 189-209 (LIAVWQGWPVYTSLIMLIIHY), 223-243 (IACAFAFACSTAGHLAFLWFA), and 308-328 (VILIFGMAGVVFLGPCSVALL).

Belongs to the membrane-bound ascI terpene cyclase family.

Its subcellular location is the membrane. It participates in secondary metabolite biosynthesis. Functionally, part of the gene cluster that mediates the biosynthesis of the indole diterpenes janthitremanes such as shearinine K or shearinine A. The geranylgeranyl diphosphate (GGPP) synthase janG catalyzes the first step in janthitremane biosynthesis via conversion of farnesyl pyrophosphate and isopentyl pyrophosphate into geranylgeranyl pyrophosphate (GGPP). Condensation of indole-3-glycerol phosphate with GGPP by the prenyl transferase janC then forms 3-geranylgeranylindole (3-GGI). Epoxidation by the FAD-dependent monooxygenase janM leads to a epoxidized-GGI that is substrate of the terpene cyclase janB for cyclization to yield paspaline. Paspaline is subsequently converted to 13-desoxypaspaline by the cytochrome P450 monooxygenase janP, via beta-PC-M6 in a series of alpha-face oxidations. The cytochrome P450 monooxygenase janQ is proposed to carry out sequential beta-face oxidation steps at C-7 and C-13 of 13-desoxypaspaline to form paspalicine and paspalinine respectively. The indole diterpene prenyltransferase janD may then convert paspalinine into shearinine K which is substrate of janO and/or additional enzymes for oxidation and cyclization to generate shearinine A. This chain is Terpene cyclase janA, found in Penicillium janthinellum (Penicillium vitale).